A 341-amino-acid chain; its full sequence is MSKHKHEWTESVANSGPASILSYCASSILMTVTNKFVVNLDNFNMNFVMLFVQSLVCTVTLCILRIVGVANFRSLNRTDVKNWFPISLLLVLMIYTSLKSLQYLAVPIYTIFKNLTIILIAYGEVLFFGGKVTSMELTSFIMMVLSSVVATWGDQQAIAIKASSLEDLDQELVESTIFVLNPGYLWMFTNCISSALFVLIMRKRIRLTNFKDYDTMFYNNVLALPLLLVFSFIMEDWSTKNLSVNLSADSLAAMVISGLMSVGISYCSGWCVRVTSSTTYSMVGALNKLPIALAGLVFFDAPKNFLSFFSIFLGFLSGLLYAVAKQKKIQQQKVLAATLEK.

At 1-11 the chain is on the cytoplasmic side; the sequence is MSKHKHEWTES. A helical membrane pass occupies residues 12 to 32; the sequence is VANSGPASILSYCASSILMTV. At 33–46 the chain is on the lumenal side; that stretch reads TNKFVVNLDNFNMN. Residues 47-67 traverse the membrane as a helical segment; that stretch reads FVMLFVQSLVCTVTLCILRIV. The Cytoplasmic segment spans residues 68 to 85; that stretch reads GVANFRSLNRTDVKNWFP. The chain crosses the membrane as a helical span at residues 86–106; the sequence is ISLLLVLMIYTSLKSLQYLAV. P107 is a topological domain (lumenal). A helical membrane pass occupies residues 108–128; that stretch reads IYTIFKNLTIILIAYGEVLFF. Residues 129-139 are Cytoplasmic-facing; that stretch reads GGKVTSMELTS. The helical transmembrane segment at 140–160 threads the bilayer; it reads FIMMVLSSVVATWGDQQAIAI. At 161-176 the chain is on the lumenal side; it reads KASSLEDLDQELVEST. Residues 177 to 197 traverse the membrane as a helical segment; it reads IFVLNPGYLWMFTNCISSALF. Topologically, residues 198-214 are cytoplasmic; sequence VLIMRKRIRLTNFKDYD. Residues 215-235 form a helical membrane-spanning segment; sequence TMFYNNVLALPLLLVFSFIME. At 236–251 the chain is on the lumenal side; it reads DWSTKNLSVNLSADSL. Residues N241 and N245 are each glycosylated (N-linked (GlcNAc...) asparagine). Residues 252-272 traverse the membrane as a helical segment; sequence AAMVISGLMSVGISYCSGWCV. Topologically, residues 273–278 are cytoplasmic; it reads RVTSST. The chain crosses the membrane as a helical span at residues 279–299; it reads TYSMVGALNKLPIALAGLVFF. Topologically, residues 300 to 303 are lumenal; it reads DAPK. A helical membrane pass occupies residues 304–324; the sequence is NFLSFFSIFLGFLSGLLYAVA. The Cytoplasmic segment spans residues 325–341; that stretch reads KQKKIQQQKVLAATLEK.

Belongs to the TPT transporter family. SLC35D subfamily.

The protein resides in the golgi apparatus membrane. It localises to the cytoplasmic vesicle membrane. It is found in the endoplasmic reticulum membrane. Involved in the import of GDP-mannose from the cytoplasm into the Golgi lumen. The chain is Probable GDP-mannose transporter 2 (HVG1) from Saccharomyces cerevisiae (strain Lalvin EC1118 / Prise de mousse) (Baker's yeast).